Here is a 402-residue protein sequence, read N- to C-terminus: E3 ubiquitin-protein ligase MARCHF11 (402 aa).

The span at 1 to 11 (MSFEGGHGGSR) shows a compositional bias: gly residues. Positions 1-161 (MSFEGGHGGS…SGGGDQRAGH (161 aa)) are disordered. The segment covering 21-56 (EPPPQPPPPPPPTPPPGEPAPVPAAPRYLPPLPASP) has biased composition (pro residues). A compositionally biased stretch (low complexity) spans 111-124 (EAAAAKGGPGESEA). The RING-CH-type zinc-finger motif lies at 162–222 (QHQHHQPICK…ELCCYRYHVI (61 aa)). 8 residues coordinate Zn(2+): cysteine 170, cysteine 173, cysteine 186, cysteine 188, histidine 196, cysteine 199, cysteine 212, and cysteine 215. The next 2 helical transmembrane spans lie at 245–265 (MIAVILGSLFLIASVTWLLWS) and 278–298 (ILFQICYGMYGFMDLVCIGLI). The short motif at 371–374 (YVLL) is the YXXL motif element. A PDZ-binding motif is present at residues 399–402 (VTSV).

In terms of assembly, interacts (YXXL motif) with AP1M1. Interacts (via PDZ-binding motif) with LIN7A. Interacts with unidentified fucose glycoproteins.

The protein localises to the cytoplasmic vesicle membrane. The catalysed reaction is S-ubiquitinyl-[E2 ubiquitin-conjugating enzyme]-L-cysteine + [acceptor protein]-L-lysine = [E2 ubiquitin-conjugating enzyme]-L-cysteine + N(6)-ubiquitinyl-[acceptor protein]-L-lysine.. It participates in protein modification; protein ubiquitination. E3 ubiquitin-protein ligase that mediates polyubiquitination of CD4. E3 ubiquitin ligases accept ubiquitin from an E2 ubiquitin-conjugating enzyme in the form of a thioester and then directly transfer the ubiquitin to targeted substrates. May play a role in ubuquitin-dependent protein sorting in developmenting spermatids. This chain is E3 ubiquitin-protein ligase MARCHF11, found in Homo sapiens (Human).